We begin with the raw amino-acid sequence, 481 residues long: FAD-linked oxidoreductase afoF (481 aa).

The first 16 residues, 1 to 16 (MRFLLQSITLVAAARA), serve as a signal peptide directing secretion. Residues 52–227 (SEWRPPTWTG…TAATFKMFDQ (176 aa)) enclose the FAD-binding PCMH-type domain. A glycan (N-linked (GlcNAc...) asparagine) is linked at N82. Pros-8alpha-FAD histidine is present on H92. N-linked (GlcNAc...) asparagine glycosylation is found at N196, N241, N276, N309, N312, and N376.

The protein belongs to the oxygen-dependent FAD-linked oxidoreductase family. The cofactor is FAD.

Its function is as follows. FAD-linked oxidoreductase; part of the gene cluster that mediates the biosynthesis of asperfuranone, a probable antitumor agent. The polyketide synthase afoG is responsible for producing the 3,5-dimethyloctadienone moiety from acetyl-CoA, three malonyl-CoA, and two S-adenosyl methionines (SAM). The 3,5-dimethyloctadienone moiety is then loaded onto the SAT domain of afoE and extended with four malonyl-CoA and one SAM, which leads to the formation of 2,4-dihydroxy-6-(5,7-dimethyl-2-oxo-trans-3-trans-5-nonadienyl)-3-methylbenzaldehyde (compound 2) after reductive release and aldol condensation. AfoD is the next enzyme in the biosynthesis sequence and hydroxylates the side chain at the benzylic position of compound 2. After benzylic hydroxylation, a furan ring is formed after five-member ring hemiacetal formation and water elimination. AfoF and afoC are proposed to oxidize the R-diketone proton and to reduce the unconjugated carbonyl group, respectively, to generate asperfuranone. Since no intermediates could be isolated from afoF and afoC deletants, the sequence of these two enzymes is not fully understood. Moreover, since afoC deletant still produces a small amount of asperfuranone, other endogenous oxidoreductases might catalyze the same reaction with much less efficiency. The protein is FAD-linked oxidoreductase afoF of Emericella nidulans (strain FGSC A4 / ATCC 38163 / CBS 112.46 / NRRL 194 / M139) (Aspergillus nidulans).